The sequence spans 231 residues: MLKRFFITGTDTSVGKTVVSRALLQALASSGKSVAGYKPVAKGSKETAEGMRNKDALVLQSVSSLELPYEAINPIALSEEESSVAHSCPINYTLLSNGLASLSDKVDHVVVEGTGGWRSLMNDLRPLSEWVVQEQLPVLMVVGIQEGCINHALLTAQAVANDGLPLIGWVANRINPGLAHYAEIIDVLGKKLPAPLIGELPYLPRAEQRELGQYIRLSMLGSVLAVDRIMA.

13-18 serves as a coordination point for ATP; that stretch reads SVGKTV. Threonine 17 is a binding site for Mg(2+). Lysine 38 is an active-site residue. ATP contacts are provided by residues aspartate 55, 112-115, 172-173, 201-203, and glutamine 208; these read EGTG, NR, and PYL. Positions 55 and 112 each coordinate Mg(2+).

The protein belongs to the dethiobiotin synthetase family. As to quaternary structure, homodimer. Mg(2+) serves as cofactor.

The protein localises to the cytoplasm. It catalyses the reaction (7R,8S)-7,8-diammoniononanoate + CO2 + ATP = (4R,5S)-dethiobiotin + ADP + phosphate + 3 H(+). Its pathway is cofactor biosynthesis; biotin biosynthesis; biotin from 7,8-diaminononanoate: step 1/2. Functionally, catalyzes a mechanistically unusual reaction, the ATP-dependent insertion of CO2 between the N7 and N8 nitrogen atoms of 7,8-diaminopelargonic acid (DAPA, also called 7,8-diammoniononanoate) to form a ureido ring. The sequence is that of ATP-dependent dethiobiotin synthetase BioD 2 from Salmonella typhimurium (strain LT2 / SGSC1412 / ATCC 700720).